The primary structure comprises 488 residues: Catalase (488 aa).

The tract at residues methionine 1 to alanine 24 is disordered. Residues leucine 7 to threonine 23 show a composition bias toward polar residues. Catalysis depends on residues histidine 55 and asparagine 128. Tyrosine 338 is a binding site for heme.

This sequence belongs to the catalase family. The cofactor is heme.

The protein resides in the cytoplasm. It carries out the reaction 2 H2O2 = O2 + 2 H2O. Functionally, decomposes hydrogen peroxide into water and oxygen; serves to protect cells from the toxic effects of hydrogen peroxide. This is Catalase (kat) from Listeria innocua serovar 6a (strain ATCC BAA-680 / CLIP 11262).